The primary structure comprises 285 residues: Methionine aminopeptidase 2 (285 aa).

His114 contacts substrate. A divalent metal cation contacts are provided by Asp131, Asp142, and His205. Substrate is bound at residue His212. Residues Glu238 and Glu269 each coordinate a divalent metal cation.

As to quaternary structure, monomer. Co(2+) is required as a cofactor. Requires Zn(2+) as cofactor. The cofactor is Mn(2+). It depends on Fe(2+) as a cofactor.

The enzyme catalyses Release of N-terminal amino acids, preferentially methionine, from peptides and arylamides.. With respect to regulation, inhibited by bengamide derivatives and by various metalloform-selective inhibitors. Removes the N-terminal methionine from nascent proteins. The N-terminal methionine is often cleaved when the second residue in the primary sequence is small and uncharged (Met-Ala-, Cys, Gly, Pro, Ser, Thr, or Val). Requires deformylation of the N(alpha)-formylated initiator methionine before it can be hydrolyzed. In Mycobacterium tuberculosis (strain ATCC 25618 / H37Rv), this protein is Methionine aminopeptidase 2.